We begin with the raw amino-acid sequence, 430 residues long: UDP-N-acetylglucosamine 1-carboxyvinyltransferase (430 aa).

22 to 23 contributes to the phosphoenolpyruvate binding site; the sequence is KN. Residue R102 coordinates UDP-N-acetyl-alpha-D-glucosamine. The active-site Proton donor is the C126. C126 is subject to 2-(S-cysteinyl)pyruvic acid O-phosphothioketal. UDP-N-acetyl-alpha-D-glucosamine-binding positions include 131–135, 172–175, D317, and I339; these read RPVDL and KVSV.

It belongs to the EPSP synthase family. MurA subfamily.

It is found in the cytoplasm. It carries out the reaction phosphoenolpyruvate + UDP-N-acetyl-alpha-D-glucosamine = UDP-N-acetyl-3-O-(1-carboxyvinyl)-alpha-D-glucosamine + phosphate. The protein operates within cell wall biogenesis; peptidoglycan biosynthesis. In terms of biological role, cell wall formation. Adds enolpyruvyl to UDP-N-acetylglucosamine. This Rhizobium johnstonii (strain DSM 114642 / LMG 32736 / 3841) (Rhizobium leguminosarum bv. viciae) protein is UDP-N-acetylglucosamine 1-carboxyvinyltransferase.